Here is a 788-residue protein sequence, read N- to C-terminus: Ribonucleoside-diphosphate reductase large subunit (788 aa).

An ATP-cone domain is found at 7–98 (TYVVKRDGRK…VSNLHKKTNK (92 aa)). ATP contacts are provided by residues 11–12 (KR), 17–23 (EDVHFDK), T59, and D63. S208 and S223 together coordinate GDP. C224 and C450 are disulfide-bonded. DTTP contacts are provided by residues 232–234 (DSI), K249, R262, and 269–270 (AG). N433 provides a ligand contact to GDP. Catalysis depends on N433, which acts as the Proton acceptor. C435 functions as the Cysteine radical intermediate in the catalytic mechanism. GDP-binding positions include E437 and 610–613 (TAST). The active-site Proton acceptor is E437.

This sequence belongs to the ribonucleoside diphosphate reductase large chain family. Heterodimer of a large and a small subunit.

It carries out the reaction a 2'-deoxyribonucleoside 5'-diphosphate + [thioredoxin]-disulfide + H2O = a ribonucleoside 5'-diphosphate + [thioredoxin]-dithiol. Its activity is regulated as follows. Under complex allosteric control mediated by deoxynucleoside triphosphates and ATP binding to separate specificity and activation sites on the large subunit. The type of nucleotide bound at the specificity site determines substrate preference. It seems probable that ATP makes the enzyme reduce CDP and UDP, dGTP favors ADP reduction and dTTP favors GDP reduction. Stimulated by ATP and inhibited by dATP binding to the activity site. Functionally, provides the precursors necessary for DNA synthesis. Catalyzes the biosynthesis of deoxyribonucleotides from the corresponding ribonucleotides. This is Ribonucleoside-diphosphate reductase large subunit (rnr-1) from Caenorhabditis elegans.